We begin with the raw amino-acid sequence, 279 residues long: HTH-type transcriptional regulator HdfR (279 aa).

The HTH lysR-type domain maps to methionine 1–threonine 58. A DNA-binding region (H-T-H motif) is located at residues phenylalanine 18–arginine 37.

The protein belongs to the LysR transcriptional regulatory family.

Its function is as follows. Negatively regulates the transcription of the flagellar master operon flhDC by binding to the upstream region of the operon. This Shigella boydii serotype 18 (strain CDC 3083-94 / BS512) protein is HTH-type transcriptional regulator HdfR.